The following is a 137-amino-acid chain: Flagellar basal body rod protein FlgB (137 aa).

Belongs to the flagella basal body rod proteins family. In terms of assembly, the basal body constitutes a major portion of the flagellar organelle and consists of a number of rings mounted on a central rod. In Gram-negative bacteria, at least four rings, L, P, S and M are present, whereas Gram-positive bacteria lack the L and P rings. The rod consists of about 26 subunits of FlgG in the distal portion, and FlgB, FlgC and FlgF build up the proximal portion of the rod with about 6 subunits each. Rod assembly occurs by export via the flagellum-specific pathway of its constituent proteins and by their incorporation into the rod structure in the probable order of FlgB, FlgC, FlgF and FlgG. Another protein, FliE, also assembles onto the stable rod structure.

It localises to the bacterial flagellum basal body. Structural component of flagellum, the bacterial motility apparatus. Part of the rod structure of flagellar basal body. This chain is Flagellar basal body rod protein FlgB, found in Yersinia ruckeri.